Consider the following 520-residue polypeptide: Pentatricopeptide repeat-containing protein At1g28690, mitochondrial (520 aa).

A mitochondrion-targeting transit peptide spans 1–19; that stretch reads MRIFRFTSISPRILPSNHY. PPR repeat units lie at residues 68–98, 99–133, 134–168, 174–208, 209–235, 236–271, 272–306, 307–337, 338–372, 373–403, and 409–439; these read DLNISIKLLILHLKCGCLSYARQVFDELPKP, TLSAYNYMISGYLKHGLVKELLLLVQRMSYSGEKA, DGYTLSMVLKASNSRGSTMILPRSLCRLVHARIIK, DDVLITALVDTYVKSGKLESARTVFETMKDENVVC, CTSMISGYMNQGFVEDAEEIFNTTKVK, DIVVYNAMVEGFSRSGETAKRSVDMYISMQRAGFHP, NISTFASVIGACSVLTSHEVGQQVHAQIMKSGVYT, HIKMGSSLLDMYAKCGGINDARRVFDQMQEK, NVFSWTSMIDGYGKNGNPEEALELFTRMKEFRIEP, NYVTFLGALSACSHSGLVDKGYEIFESMQRD, and KMEHYACIVDLMGRAGDLNKAFEFARAMPER. The segment at 444 to 520 is type E motif; the sequence is IWAALLSSCN…TIGRSWTSED (77 aa).

The protein belongs to the PPR family. PCMP-E subfamily.

It localises to the mitochondrion. The chain is Pentatricopeptide repeat-containing protein At1g28690, mitochondrial (PCMP-E34) from Arabidopsis thaliana (Mouse-ear cress).